We begin with the raw amino-acid sequence, 399 residues long: Stearoyl-[acyl-carrier-protein] 9-desaturase, chloroplastic (399 aa).

Over residues 1–12 the composition is skewed to polar residues; sequence MALNLNPVSTPF. The transit peptide at 1 to 35 directs the protein to the chloroplast; it reads MALNLNPVSTPFQCRRLPSFSPRQTPSRRSPKFFM. Positions 1–57 are disordered; it reads MALNLNPVSTPFQCRRLPSFSPRQTPSRRSPKFFMASTLSSSSPKEAESLKKPFSPP. Positions 141, 179, 182, 232, 265, and 268 each coordinate Fe cation.

The protein belongs to the fatty acid desaturase type 2 family. As to quaternary structure, homodimer. It depends on Fe(2+) as a cofactor.

It is found in the plastid. The protein localises to the chloroplast. The catalysed reaction is octadecanoyl-[ACP] + 2 reduced [2Fe-2S]-[ferredoxin] + O2 + 2 H(+) = (9Z)-octadecenoyl-[ACP] + 2 oxidized [2Fe-2S]-[ferredoxin] + 2 H2O. It participates in lipid metabolism; fatty acid metabolism. Converts stearoyl-ACP to oleoyl-ACP by introduction of a cis double bond between carbons 9 and 10 of the acyl chain. This is Stearoyl-[acyl-carrier-protein] 9-desaturase, chloroplastic from Spinacia oleracea (Spinach).